The primary structure comprises 498 residues: Neuronal acetylcholine receptor subunit beta-4 (498 aa).

Positions 1–21 are cleaved as a signal peptide; the sequence is MRRAPSLVLFFLVALCGRGNC. Residues 22 to 239 lie on the Extracellular side of the membrane; that stretch reads RVANAEEKLM…RKPLFYTINL (218 aa). Residues Asn-36, Asn-93, Asn-138, and Asn-166 are each glycosylated (N-linked (GlcNAc...) asparagine). A disulfide bridge connects residues Cys-153 and Cys-167. A helical transmembrane segment spans residues 240–255; sequence IIPCVLTTLLAILVFY. Residues 256-261 are Cytoplasmic-facing; that stretch reads LPSDCG. Glu-262 contacts Na(+). The chain crosses the membrane as a helical span at residues 262 to 277; it reads EKMTLCISVLLALTFF. Residues 278-296 are Extracellular-facing; that stretch reads LLLISKIVPPTSLDVPLIG. A helical transmembrane segment spans residues 297-321; it reads KYLMFTMVLVTFSIVTSVCVLNVHH. Residues 322-454 lie on the Cytoplasmic side of the membrane; sequence RSPSTHTMAP…QSVVEDWKYV (133 aa). The segment at 357–377 is disordered; sequence ARAFPPSKSCVTKPEATATST. The helical transmembrane segment at 455-478 threads the bilayer; it reads AMVVDRLFLWVFMFVCVLGTVGLF. Topologically, residues 479 to 498 are extracellular; the sequence is LPPLFQTHAASEGPYAAQRD.

It belongs to the ligand-gated ion channel (TC 1.A.9) family. Acetylcholine receptor (TC 1.A.9.1) subfamily. Beta-4/CHRNB4 sub-subfamily. In terms of assembly, neuronal AChR is composed of two different types of subunits: alpha and beta. CHRNB4/Beta-4 subunit can be combined to CHRNA2/alpha-2, CHRNA3/alpha-3 or CHRNA4/alpha-4, CHRNA5/alpha-5 and CHRNB3/beta-3 to give rise to functional receptors. Forms stoichiometries such as (CHRNA3)2:(CHRNB4)3 or (CHRNA3:CHRNB4)2:CHRNB3. Interacts with RIC3; which is required for proper folding and assembly. Interacts with LYPD6.

It is found in the synaptic cell membrane. It localises to the cell membrane. It catalyses the reaction Ca(2+)(in) = Ca(2+)(out). The catalysed reaction is K(+)(in) = K(+)(out). It carries out the reaction Na(+)(in) = Na(+)(out). Activated by a myriad of ligands such as acetylcholine, cytisine, nicotine, choline and epibatidine. The heteropentamer CHRNA3:CHRNB4 activity is blocked by the alpha-conotoxin ImI and AuIB. Component of neuronal acetylcholine receptors (nAChRs) that function as pentameric, ligand-gated cation channels with high calcium permeability among other activities. nAChRs are excitatory neurotrasnmitter receptors formed by a collection of nAChR subunits known to mediate synaptic transmission in the nervous system and the neuromuscular junction. Each nAchR subunit confers differential attributes to channel properties, including activation, deactivation and desensitization kinetics, pH sensitivity, cation permeability, and binding to allosteric modulators. CHRNB4 forms heteropentameric neuronal acetylcholine receptors with CHRNA2, CHRNA3 and CHRNA4, as well as CHRNA5 and CHRNB3 as accesory subunits. CHRNA3:CHRNB4 being predominant in neurons of the autonomic ganglia, it is known as ganglionic nicotinic receptor. CHRNA3:CHRNB4 or CHRNA3:CHRNA5:CHRNB4 play also an important role in the habenulo-interpeduncular tract, modulating the mesolimbic dopamine system and affecting reward circuits and addiction. Hypothalamic CHRNA3:CHRNB4 nAChR activation by nicotine leads to activation of POMC neurons and a decrease in food intake. This chain is Neuronal acetylcholine receptor subunit beta-4, found in Homo sapiens (Human).